The chain runs to 219 residues: Charged multivesicular body protein 5 (219 aa).

Over residues 1-10 (MNRLFGKAKP) the composition is skewed to basic residues. The tract at residues 1–21 (MNRLFGKAKPKAPPPSLTDCI) is disordered. A lipid anchor ((Microbial infection) N6-stearoyl lysine) is attached at lysine 7. Positions 26-179 (SRAESIDKKI…LGDELLADED (154 aa)) form a coiled coil. Phosphoserine is present on serine 86. Residues 121-158 (KQVKIDQIEDLQDQLEDMMEDANEIQEALSRSYGTPEL) are interaction with VTA1. The interval 188 to 219 (SAPAIPEGVPTDTKNKDGVLVDEFGLPQIPAS) is disordered.

Belongs to the SNF7 family. As to quaternary structure, probable peripherally associated component of the endosomal sorting required for transport complex III (ESCRT-III). ESCRT-III components are thought to multimerize to form a flat lattice on the perimeter membrane of the endosome. Several assembly forms of ESCRT-III may exist that interact and act sequentially. Interacts with VTA1; the interaction involves soluble CHMP5. Interacts with CHMP2A. Interacts with NOD2. Interacts with BROX. In terms of processing, (Microbial infection) Stearoylated By S.flexneri N-epsilon-fatty acyltransferase IcsB, promoting S.flexneri evasion of autophagy. Post-translationally, ISGylated. Isgylation inhibits its interaction with VTA1.

Its subcellular location is the cytoplasm. The protein resides in the cytosol. It is found in the endosome membrane. The protein localises to the midbody. Functionally, probable peripherally associated component of the endosomal sorting required for transport complex III (ESCRT-III) which is involved in multivesicular bodies (MVBs) formation and sorting of endosomal cargo proteins into MVBs. MVBs contain intraluminal vesicles (ILVs) that are generated by invagination and scission from the limiting membrane of the endosome and mostly are delivered to lysosomes enabling degradation of membrane proteins, such as stimulated growth factor receptors, lysosomal enzymes and lipids. The MVB pathway appears to require the sequential function of ESCRT-O, -I,-II and -III complexes. ESCRT-III proteins mostly dissociate from the invaginating membrane before the ILV is released. The ESCRT machinery also functions in topologically equivalent membrane fission events, such as the terminal stages of cytokinesis and the budding of enveloped viruses (HIV-1 and other lentiviruses). ESCRT-III proteins are believed to mediate the necessary vesicle extrusion and/or membrane fission activities, possibly in conjunction with the AAA ATPase VPS4. Involved in HIV-1 p6- and p9-dependent virus release. This chain is Charged multivesicular body protein 5 (CHMP5), found in Homo sapiens (Human).